The following is a 176-amino-acid chain: Inner membrane-spanning protein YciB (176 aa).

The next 6 helical transmembrane spans lie at 3-23 (FLFDLFPIILFFAAFKVWGIF), 24-44 (TATAVAIVATLAQVAWVAFRH), 49-69 (TMLWVSLGVIVVFGGATLVLH), 81-101 (LYWLFAIGLLAARYAFGNNLI), 121-141 (VAWALFFAVLGVANLYVVHNF), and 149-169 (FKLFGTTGAMVVFIILQSLWL).

The protein belongs to the YciB family.

The protein localises to the cell inner membrane. Its function is as follows. Plays a role in cell envelope biogenesis, maintenance of cell envelope integrity and membrane homeostasis. The polypeptide is Inner membrane-spanning protein YciB (Burkholderia lata (strain ATCC 17760 / DSM 23089 / LMG 22485 / NCIMB 9086 / R18194 / 383)).